A 203-amino-acid chain; its full sequence is Glycerol-3-phosphate acyltransferase (203 aa).

The next 6 helical transmembrane spans lie at 3–23 (ILLA…VVVS), 51–71 (KAAI…VWLV), 74–94 (FGIG…LGHL), 116–136 (AVHP…AFFF), 140–160 (SLAA…LFGT), and 164–178 (PVAW…LLIW).

The protein belongs to the PlsY family. In terms of assembly, probably interacts with PlsX.

It is found in the cell inner membrane. The enzyme catalyses an acyl phosphate + sn-glycerol 3-phosphate = a 1-acyl-sn-glycero-3-phosphate + phosphate. It functions in the pathway lipid metabolism; phospholipid metabolism. In terms of biological role, catalyzes the transfer of an acyl group from acyl-phosphate (acyl-PO(4)) to glycerol-3-phosphate (G3P) to form lysophosphatidic acid (LPA). This enzyme utilizes acyl-phosphate as fatty acyl donor, but not acyl-CoA or acyl-ACP. This is Glycerol-3-phosphate acyltransferase from Burkholderia pseudomallei (strain K96243).